We begin with the raw amino-acid sequence, 286 residues long: Diaminopimelate epimerase (286 aa).

The substrate site is built by asparagine 13 and asparagine 66. Catalysis depends on cysteine 75, which acts as the Proton donor. Residues 76 to 77 (GN), asparagine 165, asparagine 198, and 216 to 217 (ER) contribute to the substrate site. The active-site Proton acceptor is the cysteine 225. 226-227 (GT) contributes to the substrate binding site.

Belongs to the diaminopimelate epimerase family. As to quaternary structure, homodimer.

It is found in the cytoplasm. The catalysed reaction is (2S,6S)-2,6-diaminopimelate = meso-2,6-diaminopimelate. It participates in amino-acid biosynthesis; L-lysine biosynthesis via DAP pathway; DL-2,6-diaminopimelate from LL-2,6-diaminopimelate: step 1/1. Its function is as follows. Catalyzes the stereoinversion of LL-2,6-diaminopimelate (L,L-DAP) to meso-diaminopimelate (meso-DAP), a precursor of L-lysine and an essential component of the bacterial peptidoglycan. The chain is Diaminopimelate epimerase from Thermosynechococcus vestitus (strain NIES-2133 / IAM M-273 / BP-1).